The sequence spans 130 residues: Large ribosomal subunit protein bL19 (130 aa).

Belongs to the bacterial ribosomal protein bL19 family.

This protein is located at the 30S-50S ribosomal subunit interface and may play a role in the structure and function of the aminoacyl-tRNA binding site. In Parvibaculum lavamentivorans (strain DS-1 / DSM 13023 / NCIMB 13966), this protein is Large ribosomal subunit protein bL19.